The following is a 254-amino-acid chain: 5-oxoprolinase subunit A (254 aa).

It belongs to the LamB/PxpA family. Forms a complex composed of PxpA, PxpB and PxpC.

The catalysed reaction is 5-oxo-L-proline + ATP + 2 H2O = L-glutamate + ADP + phosphate + H(+). In terms of biological role, catalyzes the cleavage of 5-oxoproline to form L-glutamate coupled to the hydrolysis of ATP to ADP and inorganic phosphate. The sequence is that of 5-oxoprolinase subunit A from Acinetobacter baumannii (strain ACICU).